Consider the following 172-residue polypeptide: RNA silencing suppressor p19 (172 aa).

Basic and acidic residues predominate over residues 1 to 20 (MERAIQGNDAREQANSERWD). Residues 1-38 (MERAIQGNDAREQANSERWDGGSGGTTSPFKLPDESPS) are disordered.

It belongs to the tombusviruses protein p19 family. As to quaternary structure, homodimer.

Acts as a suppressor of RNA-mediated gene silencing, also known as post-transcriptional gene silencing (PTGS), a mechanism of plant viral defense that limits the accumulation of viral RNAs. Binds to short interfering RNAs (siRNAs) with high affinity. Acts as a molecular caliper to specifically select siRNAs based on the length of the duplex region of the RNA. In Capsicum annuum (Capsicum pepper), this protein is RNA silencing suppressor p19.